A 1628-amino-acid polypeptide reads, in one-letter code: THO complex subunit 2 (1628 aa).

Composition is skewed to basic and acidic residues over residues 1 to 10 and 1360 to 1399; these read MTSLPEKDQQ and TDNKNLVENKAVEKRVEARSSANERKQEERRRKTTPEGNR. Disordered stretches follow at residues 1–21 and 1337–1628; these read MTSLPEKDQQGEVSVSENQKK and VALN…RKIQ. Phosphothreonine occurs at positions 1406 and 1408. Over residues 1411 to 1429 the composition is skewed to basic and acidic residues; that stretch reads DIQRSDSKLREDQSRDRTP. Over residues 1430 to 1444 the composition is skewed to polar residues; the sequence is QSRSFTNENNDNLRS. Positions 1461–1474 are enriched in basic and acidic residues; sequence ARREHESQKSDRWR. Over residues 1476–1493 the composition is skewed to low complexity; sequence NGNVNRNPRVSNNNSTNV. Over residues 1494–1526 the composition is skewed to basic and acidic residues; that stretch reads SRERSSEANHRTSNDNKRDEVTEGKDKNKRQDI. The span at 1527–1550 shows a compositional bias: polar residues; that stretch reads SGESNSRQNNAISRAGRSNGSNRG. Residues 1551-1560 show a composition bias toward basic and acidic residues; it reads NDSRDADGRR. Ser-1577 carries the post-translational modification Phosphoserine. Positions 1581–1628 are enriched in basic and acidic residues; it reads LREEDERENSRRRARQDDRRDRDSRQQRDRPRDRTSRSAREEKRRKIQ.

The protein belongs to the THOC2 family. In terms of assembly, component of the THO complex. THO associates with DNA and RNA in vitro.

The protein localises to the nucleus. Component the THO subcomplex of the TREX complex, which operates in coupling transcription elongation to mRNA export. The THO complex is recruited to transcribed genes and moves along the gene with the elongating polymerase during transcription. THO is important for stabilizing nascent RNA in the RNA polymerase II elongation complex by preventing formation of DNA:RNA hybrids behind the elongating polymerase. In Schizosaccharomyces pombe (strain 972 / ATCC 24843) (Fission yeast), this protein is THO complex subunit 2 (tho2).